Consider the following 887-residue polypeptide: Phosphatidylinositol 3-kinase catalytic subunit type 3 (887 aa).

A C2 PI3K-type domain is found at Tyr35 to Gln184. The interval Val149–Asp170 is disordered. Over residues Pro156–Asp170 the composition is skewed to polar residues. Phosphothreonine; by AMPK is present on Thr163. Ser165 is modified (phosphoserine; by AMPK). Residues Ser244, Ser261, and Ser282 each carry the phosphoserine modification. The 238-residue stretch at Asp283–Val520 folds into the PIK helical domain. Residues Glu416–Asp467 are disordered. Low complexity predominate over residues Gln423 to Gln444. Pro residues predominate over residues Pro449–Ala459. Residues Ile605 to Phe871 form the PI3K/PI4K catalytic domain. A G-loop region spans residues Leu611 to Met617. A catalytic loop region spans residues Gly740–Asn748. The activation loop stretch occupies residues His759–Asn780.

It belongs to the PI3/PI4-kinase family. As to quaternary structure, component of the PI3K (PI3KC3/PI3K-III/class III phosphatidylinositol 3-kinase) complex the core of which is composed of the catalytic subunit PIK3C3, the regulatory subunit PIK3R4 and BECN1 associating with additional regulatory/auxiliary subunits to form alternative complex forms. Alternative complex forms containing a fourth regulatory subunit in a mutually exclusive manner are: the PI3K complex I (PI3KC3-C1) containing ATG14, and the PI3K complex II (PI3KC3-C2) containing UVRAG. PI3KC3-C1 displays a V-shaped architecture with PIK3R4 serving as a bridge between PIK3C3 and the ATG14:BECN1 subcomplex. Both, PI3KC3-C1 and PI3KC3-C2, can associate with further regulatory subunits such as RUBCN, SH3GLB1/Bif-1 and AMBRA1. PI3KC3-C1 probably associates with PIK3CB. Interacts with RAB7A in the presence of PIK3R4. Interacts with AMBRA1. Interacts with BECN1P1/BECN2. Interacts with SLAMF1. May interact with DYN2. May be a component of a complex composed of RAB5A (in GDP-bound form), DYN2 and PIK3C3. Interacts with NCKAP1L. Interacts with ATG14; this interaction is increased in the absence of TMEM39A. Interacts with STEEP1; the interaction is STING1-dependent and required for trafficking of STING1 from the endoplasmic reticulum. Interacts with YWHAG. Interacts with ARMC3. It depends on Mn(2+) as a cofactor. In terms of processing, ubiquitinated via 'Lys-29'- and 'Lys-48'-linked ubiquitination by UBE3C, promoting its degradation. Deubiquitination by ZRANB1/TRABID promotes its stabilization, leading to autophagosome maturation.

The protein localises to the midbody. The protein resides in the late endosome. It is found in the cytoplasmic vesicle. It localises to the autophagosome. It carries out the reaction a 1,2-diacyl-sn-glycero-3-phospho-(1D-myo-inositol) + ATP = a 1,2-diacyl-sn-glycero-3-phospho-(1D-myo-inositol-3-phosphate) + ADP + H(+). Catalytic subunit of the PI3K complex that mediates formation of phosphatidylinositol 3-phosphate; different complex forms are believed to play a role in multiple membrane trafficking pathways: PI3KC3-C1 is involved in initiation of autophagosomes and PI3KC3-C2 in maturation of autophagosomes and endocytosis. As part of PI3KC3-C1, promotes endoplasmic reticulum membrane curvature formation prior to vesicle budding. Involved in regulation of degradative endocytic trafficking and required for the abscission step in cytokinesis, probably in the context of PI3KC3-C2. Involved in the transport of lysosomal enzyme precursors to lysosomes. Required for transport from early to late endosomes. The polypeptide is Phosphatidylinositol 3-kinase catalytic subunit type 3 (Rattus norvegicus (Rat)).